A 263-amino-acid chain; its full sequence is Izumo sperm-egg fusion protein 3 (263 aa).

The N-terminal stretch at 1-22 is a signal peptide; sequence MGDLWVLLFSSLSLAAFHGVRG. At 23-176 the chain is on the extracellular side; it reads CLECDPKFTE…EDPKTAENRE (154 aa). Asparagine 98 and asparagine 128 each carry an N-linked (GlcNAc...) asparagine glycan. A helical transmembrane segment spans residues 177–197; that stretch reads ISLYLIFIAEAVILASAVLLF. The Cytoplasmic portion of the chain corresponds to 198–263; it reads HVCISHRRKM…CAESEMQTGT (66 aa). The tract at residues 241 to 263 is disordered; it reads GRSNSNSLTGEPTCAESEMQTGT.

Belongs to the Izumo family. In terms of assembly, monomer and homodimer. Sperm-specific (at protein level).

Its subcellular location is the cell membrane. It is found in the cytoplasmic vesicle. The protein resides in the secretory vesicle. The protein localises to the acrosome inner membrane. Functionally, plays an important role in the biogenesis of the acrosome during sperm development. The protein is Izumo sperm-egg fusion protein 3 (Izumo3) of Mus musculus (Mouse).